A 734-amino-acid polypeptide reads, in one-letter code: MALRFPRFSQGLAQDPTTRRIWFGIATAHDFESHDDITEERLYQNIFASHFGQLAIIFLWTSGNLFHVAWQGNFETWIQDPLHVRPIAHAIWDPHFGQPAVEAFTRGGALGPVNIAYSGVYQWWYTIGLRTNEDLYTGALFLLFLSALSLIGGWLHLQPKWKPRVSWFKNAESRLNHHLSGLFGVSSLAWTGHLVHVAIPASRGEYVRWNNFLNVLPHPQGLGPLFTGQWNLYAQNPDSSSHLFGTSQGSGTAILTLLGGFHPQTQSLWLTDMAHHHLAIAILFLIAGHMYRTNFGIGHSIKDLLEAHIPPGGRLGRGHKGLYDTINNSIHFQLGLALASLGVITSLVAQHMYSLPAYAFIAQDFTTQAALYTHHQYIAGFIMTGAFAHGAIFFIRDYNPEQNEDNVLARMLDHKEAIISHLSWASLFLGFHTLGLYVHNDVMLAFGTPEKQILIEPIFAQWIQSAHGKTSYGFDVLLSSTNGPAFNAGRSIWLPGWLNAINENSNSLFLTIGPGDFLVHHAIALGLHTTTLILVKGALDARGSKLMPDKKDFGYSFPCDGPGRGGTCDISAWDAFYLAVFWMLNTIGWVTFYWHWKHITLWQGNVSQFNESSTYLMGWLRDYLWLNSSQLINGYNPFGMNSLSVWAWMFLFGHLVWATGFMFLISWRGYWQELIETLAWAHERTPLANLIRWKDKPVALSIVQARLVGLAHFSVGYIFTYAAFLIASTSGKFG.

Transmembrane regions (helical) follow at residues 46-69 (IFAS…FHVA), 135-158 (LYTG…LHLQ), 175-199 (LNHH…HVAI), 273-291 (MAHH…GHMY), 330-353 (IHFQ…QHMY), 369-395 (AALY…IFFI), 417-439 (AIIS…LYVH), and 517-535 (FLVH…LILV). Positions 559 and 568 each coordinate [4Fe-4S] cluster. 2 helical membrane-spanning segments follow: residues 575–596 (AFYL…YWHW) and 643–665 (LSVW…MFLI). 3 residues coordinate chlorophyll a: His654, Met662, and Tyr670. Trp671 lines the phylloquinone pocket. A helical membrane pass occupies residues 707-727 (LVGLAHFSVGYIFTYAAFLIA).

This sequence belongs to the PsaA/PsaB family. As to quaternary structure, the PsaA/B heterodimer binds the P700 chlorophyll special pair and subsequent electron acceptors. PSI consists of a core antenna complex that captures photons, and an electron transfer chain that converts photonic excitation into a charge separation. The eukaryotic PSI reaction center is composed of at least 11 subunits. Requires P700 is a chlorophyll a/chlorophyll a' dimer, A0 is one or more chlorophyll a, A1 is one or both phylloquinones and FX is a shared 4Fe-4S iron-sulfur center. as cofactor.

It localises to the plastid. The protein localises to the chloroplast thylakoid membrane. The catalysed reaction is reduced [plastocyanin] + hnu + oxidized [2Fe-2S]-[ferredoxin] = oxidized [plastocyanin] + reduced [2Fe-2S]-[ferredoxin]. Functionally, psaA and PsaB bind P700, the primary electron donor of photosystem I (PSI), as well as the electron acceptors A0, A1 and FX. PSI is a plastocyanin-ferredoxin oxidoreductase, converting photonic excitation into a charge separation, which transfers an electron from the donor P700 chlorophyll pair to the spectroscopically characterized acceptors A0, A1, FX, FA and FB in turn. Oxidized P700 is reduced on the lumenal side of the thylakoid membrane by plastocyanin. This Arabis hirsuta (Hairy rock-cress) protein is Photosystem I P700 chlorophyll a apoprotein A2.